The primary structure comprises 89 residues: Small ribosomal subunit protein uS14 (89 aa).

It belongs to the universal ribosomal protein uS14 family. In terms of assembly, part of the 30S ribosomal subunit. Contacts proteins S3 and S10.

Its function is as follows. Binds 16S rRNA, required for the assembly of 30S particles and may also be responsible for determining the conformation of the 16S rRNA at the A site. The protein is Small ribosomal subunit protein uS14 of Acholeplasma laidlawii (strain PG-8A).